The chain runs to 161 residues: SsrA-binding protein (161 aa).

It belongs to the SmpB family.

It is found in the cytoplasm. Its function is as follows. Required for rescue of stalled ribosomes mediated by trans-translation. Binds to transfer-messenger RNA (tmRNA), required for stable association of tmRNA with ribosomes. tmRNA and SmpB together mimic tRNA shape, replacing the anticodon stem-loop with SmpB. tmRNA is encoded by the ssrA gene; the 2 termini fold to resemble tRNA(Ala) and it encodes a 'tag peptide', a short internal open reading frame. During trans-translation Ala-aminoacylated tmRNA acts like a tRNA, entering the A-site of stalled ribosomes, displacing the stalled mRNA. The ribosome then switches to translate the ORF on the tmRNA; the nascent peptide is terminated with the 'tag peptide' encoded by the tmRNA and targeted for degradation. The ribosome is freed to recommence translation, which seems to be the essential function of trans-translation. This Baumannia cicadellinicola subsp. Homalodisca coagulata protein is SsrA-binding protein.